The sequence spans 155 residues: Ribosome-binding factor A (155 aa).

This sequence belongs to the RbfA family. In terms of assembly, monomer. Binds 30S ribosomal subunits, but not 50S ribosomal subunits or 70S ribosomes.

It localises to the cytoplasm. In terms of biological role, one of several proteins that assist in the late maturation steps of the functional core of the 30S ribosomal subunit. Associates with free 30S ribosomal subunits (but not with 30S subunits that are part of 70S ribosomes or polysomes). Required for efficient processing of 16S rRNA. May interact with the 5'-terminal helix region of 16S rRNA. This is Ribosome-binding factor A from Methylocella silvestris (strain DSM 15510 / CIP 108128 / LMG 27833 / NCIMB 13906 / BL2).